A 780-amino-acid chain; its full sequence is uncharacterized protein (780 aa).

The BTB domain maps to 10 to 80 (NNNIIKLNIG…MRTGTFTLPY (71 aa)).

This is an uncharacterized protein from Dictyostelium discoideum (Social amoeba).